A 233-amino-acid polypeptide reads, in one-letter code: tRNA pseudouridine synthase B (233 aa).

Asp-48 acts as the Nucleophile in catalysis.

Belongs to the pseudouridine synthase TruB family. Type 1 subfamily.

The catalysed reaction is uridine(55) in tRNA = pseudouridine(55) in tRNA. Its function is as follows. Responsible for synthesis of pseudouridine from uracil-55 in the psi GC loop of transfer RNAs. This chain is tRNA pseudouridine synthase B, found in Bacteroides fragilis (strain ATCC 25285 / DSM 2151 / CCUG 4856 / JCM 11019 / LMG 10263 / NCTC 9343 / Onslow / VPI 2553 / EN-2).